A 1332-amino-acid polypeptide reads, in one-letter code: Aldehyde oxidase 1 (1332 aa).

In terms of domain architecture, 2Fe-2S ferredoxin-type spans 4 to 91; that stretch reads STLYFYVNGR…GAAVTTVEGV (88 aa). 4 residues coordinate [2Fe-2S] cluster: C43, C48, C51, and C73. Mo-molybdopterin is bound at residue Q112. Positions 113, 116, 148, and 150 each coordinate [2Fe-2S] cluster. C150 is a binding site for Mo-molybdopterin. In terms of domain architecture, FAD-binding PCMH-type spans 234–419; the sequence is FTGDRVTWIS…LSVTIPYSRK (186 aa). Residues 262 to 269, A343, S352, H356, D365, and L409 contribute to the FAD site; that span reads VVMGNTSV. Mo-molybdopterin contacts are provided by residues 800 to 801, M1041, 1082 to 1085, Q1197, and L1262; these read AF and GSVV. Residue E1264 is the Proton acceptor; for azaheterocycle hydroxylase activity of the active site.

Belongs to the xanthine dehydrogenase family. As to quaternary structure, homodimer. [2Fe-2S] cluster serves as cofactor. The cofactor is FAD. Requires Mo-molybdopterin as cofactor. As to expression, expressed in liver.

The protein resides in the cytoplasm. It carries out the reaction an aldehyde + O2 + H2O = a carboxylate + H2O2 + H(+). The enzyme catalyses retinal + O2 + H2O = retinoate + H2O2 + H(+). Inhibited by menadione and isovanillin. Not inhibited by allopurinol, a xanthine dehydrogenase potent inhibitor. Functionally, oxidase with broad substrate specificity, oxidizing aromatic azaheterocycles, such as N1-methylnicotinamide, N-methylphthalazinium and phthalazine, as well as aldehydes, such as benzaldehyde, retinal, pyridoxal, and vanillin. Plays a key role in the metabolism of xenobiotics and drugs containing aromatic azaheterocyclic substituents. Participates in the bioactivation of prodrugs such as famciclovir, catalyzing the oxidation step from 6-deoxypenciclovir to penciclovir, which is a potent antiviral agent. Is probably involved in the regulation of reactive oxygen species homeostasis. May be a prominent source of superoxide generation via the one-electron reduction of molecular oxygen. May also catalyze nitric oxide (NO) production via the reduction of nitrite to NO with NADH or aldehyde as electron donor. May play a role in adipogenesis. The chain is Aldehyde oxidase 1 from Cavia porcellus (Guinea pig).